The chain runs to 376 residues: Salivary hyaluronidase (376 aa).

The N-terminal stretch at 1-16 is a signal peptide; that stretch reads MNWIFHLFCAVYGIFC. 2 cysteine pairs are disulfide-bonded: cysteine 32–cysteine 328 and cysteine 203–cysteine 217. N-linked (GlcNAc...) asparagine glycosylation is found at asparagine 36, asparagine 55, asparagine 77, and asparagine 88. Glutamate 118 acts as the Proton donor in catalysis. Residues asparagine 143, asparagine 153, asparagine 181, asparagine 214, asparagine 226, asparagine 248, asparagine 287, asparagine 321, asparagine 336, asparagine 356, and asparagine 371 are each glycosylated (N-linked (GlcNAc...) asparagine).

It belongs to the glycosyl hydrolase 56 family. In terms of processing, glycosylated; glycosylation is critical for enzymatic activity. Female salivary gland (at protein level).

It localises to the secreted. It carries out the reaction Random hydrolysis of (1-&gt;4)-linkages between N-acetyl-beta-D-glucosamine and D-glucuronate residues in hyaluronate.. In terms of biological role, hydrolyzes high molecular weight hyaluronic acid to produce small oligosaccharides. Up-regulates expression of CSF2, CSF3, LIF, CXCL1, CXCL2 and CXCL8 in cultured human dermal microvascular endothelial cells. Promotes host neutrophil recruitment at the injection site. Functionally, (Microbial infection) Probably promotes Leishmania major infection in the host. The protein is Salivary hyaluronidase of Lutzomyia longipalpis (Sand fly).